A 146-amino-acid chain; its full sequence is Coactosin (146 aa).

Residues 1–132 (MADVSSTELK…NEEELMTKVR (132 aa)) enclose the ADF-H domain.

The protein belongs to the actin-binding proteins ADF family. Coactosin subfamily. Post-translationally, the N-terminus is blocked.

The protein localises to the cytoplasm. Its subcellular location is the cytoskeleton. Functionally, binds to F-actin in a calcium independent manner. Binds to the filaments along their length. The chain is Coactosin (coaA) from Dictyostelium discoideum (Social amoeba).